Reading from the N-terminus, the 612-residue chain is Lipoma-preferred partner (612 aa).

2 disordered regions span residues 1 to 118 and 132 to 219; these read MSHP…SSLD and ECSS…SSRP. Positions 26-40 are enriched in polar residues; it reads THSFGNPSISVSTQQ. The segment covering 41–53 has biased composition (low complexity); that stretch reads PPKKFAPVVAPKP. Lys108 is modified (N6-acetyllysine). Residues Ser116 and Ser151 each carry the phosphoserine modification. Polar residues-rich tracts occupy residues 143–158 and 171–181; these read QSST…STPV and PLTATKKSTLK. A compositionally biased stretch (pro residues) spans 183–193; it reads QPAPQAGPIPV. Positions 209–219 are enriched in polar residues; the sequence is SYTTASTSSRP. Tyr244 and Tyr301 each carry phosphotyrosine. Positions 307–387 are disordered; that stretch reads YGGRNDSDPT…LGPSSVAPSF (81 aa). Residues 314–323 are compositionally biased toward polar residues; the sequence is DPTYGQQGHP. Lys327 is covalently cross-linked (Glycyl lysine isopeptide (Lys-Gly) (interchain with G-Cter in SUMO1)). The residue at position 333 (Thr333) is a Phosphothreonine. Ser375 carries the phosphoserine modification. LIM zinc-binding domains follow at residues 414 to 473, 474 to 534, and 535 to 603; these read GRCA…INTL, EQCN…KFAP, and RCSV…RIRV.

Belongs to the zyxin/ajuba family. Interacts with VASP, with PDZ domains of SCRIB and with ACTN1/alpha-actinin. Expressed in a wide variety of tissues but no or very low expression in brain and peripheral leukocytes.

It localises to the nucleus. The protein localises to the cytoplasm. The protein resides in the cell junction. It is found in the cell membrane. In terms of biological role, may play a structural role at sites of cell adhesion in maintaining cell shape and motility. In addition to these structural functions, it may also be implicated in signaling events and activation of gene transcription. May be involved in signal transduction from cell adhesion sites to the nucleus allowing successful integration of signals arising from soluble factors and cell-cell adhesion sites. Also suggested to serve as a scaffold protein upon which distinct protein complexes are assembled in the cytoplasm and in the nucleus. The chain is Lipoma-preferred partner (LPP) from Homo sapiens (Human).